We begin with the raw amino-acid sequence, 540 residues long: FAD-binding monooxygenase lolF2 (540 aa).

Residues 43 to 46 (VWRE) and 55 to 58 (DSLF) each bind FAD. Residues 53 to 55 (AVD), 182 to 188 (TGPSGVQ), and 205 to 206 (QS) each bind NADP(+).

This sequence belongs to the FAD-binding monooxygenase family. FAD is required as a cofactor.

It functions in the pathway alkaloid biosynthesis. In terms of biological role, FAD-binding monooxygenase; part of the gene cluster that mediates the biosynthesis of loline alkaloids, potent insecticidal agents composed of a pyrrolizidine ring system and an uncommon ether bridge linking carbons 2 and 7. Lolines are structurally differentiated by the various modifications of the L-amino group and include norloline, loline, N-methylloline, N-acetylloline, N-acetylnorloline, and N-formylloline. The first committed step is the condensation of O-acetyl-L-homoserine (derived from L-aspartic acid) and L-proline, probably catalyzed by the gamma-type pyridoxal 5'-phosphate(PLP)-dependent enzyme lolC, to give the diamino diacid, NACPP. Ensuing cyclization, decarboxylation, and acetylation steps yield 1-exo-acetamidopyrrolizidine (AcAP). LolO is required for installation of the ether bridge upon the pathway intermediate, 1-exo-acetamidopyrrolizidine (AcAP). In sequential 2-oxoglutarate- and O(2)-consuming steps, lolO removes hydrogens from C2 and C7 of AcAP to form both carbon-oxygen bonds in N-acetylnorloline (NANL), the precursor to all other lolines. The enzymes lolD, lolE, lolF and lolT have also been proposed to be involved in the ether-bridge installation. Further processing of the exocyclic moiety of NANL by fungal N-acetamidase (LolN), methyltransferase (LolM), and cytochrome P450 (LolP) enzymes, with occasional involvement of a plant acetyltransferase, generates the other known lolines. LolN transforms NANL to norlonine which is monomethylated and dimethylated to respectively lonine and N-methyllonine (NML) by lolM. LolP catalyzes hydroxylation of the methyl group in N-methylloline (NML) and further oxygenation to N-formylloline (NFL). A plant acetyltransferase is responsible for the acetylation of loline to form N-acetylloline (NAL). LolA might interact with aspartate kinase to prevent feedback inhibition of its activity by these end products and thereby promote production of l-homoserine from l-aspartate. The protein is FAD-binding monooxygenase lolF2 of Epichloe uncinata (Endophyte fungus).